The primary structure comprises 52 residues: Large ribosomal subunit protein bL33A (52 aa).

It belongs to the bacterial ribosomal protein bL33 family.

The sequence is that of Large ribosomal subunit protein bL33A from Staphylococcus aureus (strain USA300).